Reading from the N-terminus, the 548-residue chain is 4-coumarate--CoA ligase CCL1 (548 aa).

ATP contacts are provided by residues 195 to 203 (SSGTTGLPK), 337 to 342 (QGYGMT), aspartate 426, 438 to 441 (IVDR), and lysine 532. Positions 268 to 337 (EISKLLELIE…EKLPHAKLGQ (70 aa)) are SBD1. An SBD2 region spans residues 338 to 405 (GYGMTEAGPV…IRGKQIMKGY (68 aa)).

The protein belongs to the ATP-dependent AMP-binding enzyme family. In terms of tissue distribution, mostly expressed in glandular trichomes (lupulin glands) after flowering, and, to a lower extent, in stems, leaves, cones and flowers.

It is found in the cytoplasm. It carries out the reaction (E)-4-coumarate + ATP + CoA = (E)-4-coumaroyl-CoA + AMP + diphosphate. It functions in the pathway secondary metabolite biosynthesis. Its function is as follows. Involved in the biosynthesis of prenylated phenolics natural products which contribute to the bitter taste of beer and display broad biological activities. Catalyzes the ligation of CoA on (E)-4-coumarate to produce (E)-4-coumaroyl-CoA. In Humulus lupulus (European hop), this protein is 4-coumarate--CoA ligase CCL1.